The primary structure comprises 180 residues: Centromere protein M (180 aa).

It is found in the nucleus. The protein resides in the chromosome. Its subcellular location is the centromere. Functionally, probable component of a centromeric complex involved in assembly of kinetochore proteins, mitotic progression and chromosome segregation. This is Centromere protein M (cenpm) from Xenopus laevis (African clawed frog).